The sequence spans 315 residues: 4-diphosphocytidyl-2-C-methyl-D-erythritol kinase (315 aa).

The active site involves Lys10. 107–117 (PVAGGMAGGSA) serves as a coordination point for ATP. Asp148 is a catalytic residue. A disordered region spans residues 292 to 315 (HPATSPVPGPAKNRGAHIVSIESE).

The protein belongs to the GHMP kinase family. IspE subfamily.

The catalysed reaction is 4-CDP-2-C-methyl-D-erythritol + ATP = 4-CDP-2-C-methyl-D-erythritol 2-phosphate + ADP + H(+). It participates in isoprenoid biosynthesis; isopentenyl diphosphate biosynthesis via DXP pathway; isopentenyl diphosphate from 1-deoxy-D-xylulose 5-phosphate: step 3/6. Its function is as follows. Catalyzes the phosphorylation of the position 2 hydroxy group of 4-diphosphocytidyl-2C-methyl-D-erythritol. This is 4-diphosphocytidyl-2-C-methyl-D-erythritol kinase from Corynebacterium efficiens (strain DSM 44549 / YS-314 / AJ 12310 / JCM 11189 / NBRC 100395).